Consider the following 118-residue polypeptide: SPbeta prophage-derived uncharacterized protein YoqR (118 aa).

The protein is SPbeta prophage-derived uncharacterized protein YoqR (yoqR) of Bacillus subtilis (strain 168).